The sequence spans 426 residues: MPDAYVESLGKMIAILVNYKPGSITLENITRLCQTMGLESFVDQVSANISRLSIASKIIVIDIDYEVTDGKVIDVKLVLASNFDKFDYFNGEANILHRSLTTYSDLHEFHHNLKFLTLLDACSSIDIESNVSQFDLFEYYSMLPQYMQSYLDDNGAQLTVQTNLNDRFGIYLLDHSEKKVAKLTFAATQDPNQRYYEYKYSSETKEWINQSAESYTTGITLVFELLGDPPTYLPKDSLPPEHPDEGFTSASASELQRRFAFKCQNPRVTLVNDFTVDVYPASTFQLLNDNICLCFDILRRQKWWHTVLYPISQLLLHQGQDSAVGDAPAPAAQPPLHRRRSSNKGCRRASAAESATLGDENMHQLTLTEIMNKSVIPEDDAMMDDRIELYVNENYVYLGTQEGCSFYNDPIERWEAFVESLRQMLT.

The segment at 324–356 (VGDAPAPAAQPPLHRRRSSNKGCRRASAAESAT) is disordered. Over residues 336–347 (LHRRRSSNKGCR) the composition is skewed to basic residues.

The protein belongs to the Mediator complex subunit 1 family. As to quaternary structure, component of the Mediator complex.

It localises to the nucleus. Its function is as follows. Component of the Mediator complex, a coactivator involved in the regulated transcription of nearly all RNA polymerase II-dependent genes. Mediator functions as a bridge to convey information from gene-specific regulatory proteins to the basal RNA polymerase II transcription machinery. Mediator is recruited to promoters by direct interactions with regulatory proteins and serves as a scaffold for the assembly of a functional preinitiation complex with RNA polymerase II and the general transcription factors. This chain is Mediator of RNA polymerase II transcription subunit 1 (MED1), found in Eremothecium gossypii (strain ATCC 10895 / CBS 109.51 / FGSC 9923 / NRRL Y-1056) (Yeast).